Here is a 244-residue protein sequence, read N- to C-terminus: Octanoyltransferase (244 aa).

The segment at 1 to 21 is disordered; that stretch reads MDKKLHSVSPESGPNSNLDLT. Over residues 9 to 21 the composition is skewed to polar residues; the sequence is SPESGPNSNLDLT. The 186-residue stretch at 59–244 folds into the BPL/LPL catalytic domain; it reads PFSPQAVWLL…LNWEKINQSL (186 aa). Residues 101–108, 168–170, and 181–183 contribute to the substrate site; these read RGGEVTHH, SIG, and GFS. Cysteine 199 (acyl-thioester intermediate) is an active-site residue.

Belongs to the LipB family.

It localises to the cytoplasm. It carries out the reaction octanoyl-[ACP] + L-lysyl-[protein] = N(6)-octanoyl-L-lysyl-[protein] + holo-[ACP] + H(+). The protein operates within protein modification; protein lipoylation via endogenous pathway; protein N(6)-(lipoyl)lysine from octanoyl-[acyl-carrier-protein]: step 1/2. In terms of biological role, catalyzes the transfer of endogenously produced octanoic acid from octanoyl-acyl-carrier-protein onto the lipoyl domains of lipoate-dependent enzymes. Lipoyl-ACP can also act as a substrate although octanoyl-ACP is likely to be the physiological substrate. The protein is Octanoyltransferase of Prochlorococcus marinus (strain NATL1A).